Consider the following 132-residue polypeptide: Small ribosomal subunit protein uS8 (132 aa).

It belongs to the universal ribosomal protein uS8 family. In terms of assembly, part of the 30S ribosomal subunit. Contacts proteins S5 and S12.

One of the primary rRNA binding proteins, it binds directly to 16S rRNA central domain where it helps coordinate assembly of the platform of the 30S subunit. In Xanthomonas campestris pv. campestris (strain 8004), this protein is Small ribosomal subunit protein uS8.